A 170-amino-acid chain; its full sequence is MRIFITGMPGVGKTTLALKIAEKLKELGYKVGGFITKEIRDGGKRVGFKIITLDTNEETILAYVGDGKIKVGKYAVFIENLDNVGVEAIKRALKDADIIIIDELGAMEFKSRKFSEVVDEVIKSDKPLLATLHRNWVNKFKDKGELYTLTIENREKLFEEILNKILAGLK.

ATP contacts are provided by residues 7 to 14 (GMPGVGKT) and 98 to 105 (IIIIDELG).

The protein belongs to the THEP1 NTPase family.

The catalysed reaction is a ribonucleoside 5'-triphosphate + H2O = a ribonucleoside 5'-diphosphate + phosphate + H(+). In terms of biological role, has nucleotide phosphatase activity towards ATP, GTP, CTP, TTP and UTP. May hydrolyze nucleoside diphosphates with lower efficiency. The sequence is that of Nucleoside-triphosphatase THEP1 from Methanocaldococcus jannaschii (strain ATCC 43067 / DSM 2661 / JAL-1 / JCM 10045 / NBRC 100440) (Methanococcus jannaschii).